A 335-amino-acid chain; its full sequence is Nucleoid-associated protein YejK (335 aa).

This sequence belongs to the YejK family.

The protein resides in the cytoplasm. It is found in the nucleoid. The polypeptide is Nucleoid-associated protein YejK (Shigella flexneri).